The chain runs to 335 residues: Urokinase plasminogen activator surface receptor (335 aa).

A signal peptide spans 1-22 (MGHPPLLPLLLLLHTCVPASWG). UPAR/Ly6 domains are found at residues 23-114 (LRCM…RSRY), 115-213 (LECI…PQNG), and 214-305 (RQCY…YRSG). Intrachain disulfides connect C25-C46, C28-C34, and C39-C67. A glycan (N-linked (GlcNAc...) asparagine) is linked at N74. 11 cysteine pairs are disulfide-bonded: C93-C98, C117-C144, C120-C127, C137-C169, C175-C192, C193-C198, C216-C244, C219-C227, C237-C263, C269-C287, and C288-C293. N184, N194, N222, and N255 each carry an N-linked (GlcNAc...) asparagine glycan. A lipid anchor (GPI-anchor amidated glycine) is attached at G305. Positions 306 to 335 (AAPQPGPAHLSLTITLLMTARLWGGTLLWT) are cleaved as a propeptide — removed in mature form.

Monomer. Interacts with MRC2. Interacts (via the UPAR/Ly6 domains) with SRPX2. Interacts with FAP (seprase); the interaction occurs at the cell surface of invadopodia membrane. Interacts with SORL1 (via N-terminal ectodomain); this interaction decreases PLAUR internalization. The ternary complex composed of PLAUR-PLAU-SERPINE1 also interacts with SORL1. Interacts with CD82; this interaction prevents PLAUR from binding to its high affinity ligand PLAU. Expressed in neurons of the rolandic area of the brain (at protein level). Expressed in the brain.

It localises to the cell membrane. The protein resides in the cell projection. Its subcellular location is the invadopodium membrane. The protein localises to the secreted. Functionally, acts as a receptor for urokinase plasminogen activator. Plays a role in localizing and promoting plasmin formation. Mediates the proteolysis-independent signal transduction activation effects of U-PA. It is subject to negative-feedback regulation by U-PA which cleaves it into an inactive form. This chain is Urokinase plasminogen activator surface receptor (PLAUR), found in Homo sapiens (Human).